A 191-amino-acid chain; its full sequence is Cell division protein SepF (191 aa).

Residues 1 to 77 (MEGQDDYQLL…MGSNVIGLPG (77 aa)) are disordered.

The protein belongs to the SepF family. In terms of assembly, homodimer. Interacts with FtsZ.

The protein localises to the cytoplasm. Functionally, cell division protein that is part of the divisome complex and is recruited early to the Z-ring. Probably stimulates Z-ring formation, perhaps through the cross-linking of FtsZ protofilaments. Its function overlaps with FtsA. This Synechococcus sp. (strain JA-2-3B'a(2-13)) (Cyanobacteria bacterium Yellowstone B-Prime) protein is Cell division protein SepF.